The sequence spans 629 residues: tRNA uridine 5-carboxymethylaminomethyl modification enzyme MnmG (629 aa).

Residues 13–18 (GGGHAG), Val125, and Ser180 each bind FAD. Residue 273 to 287 (GPRYCPSIEDKIHRF) coordinates NAD(+). Gln370 contributes to the FAD binding site.

This sequence belongs to the MnmG family. In terms of assembly, homodimer. Heterotetramer of two MnmE and two MnmG subunits. FAD is required as a cofactor.

It is found in the cytoplasm. Functionally, NAD-binding protein involved in the addition of a carboxymethylaminomethyl (cmnm) group at the wobble position (U34) of certain tRNAs, forming tRNA-cmnm(5)s(2)U34. The chain is tRNA uridine 5-carboxymethylaminomethyl modification enzyme MnmG from Shewanella oneidensis (strain ATCC 700550 / JCM 31522 / CIP 106686 / LMG 19005 / NCIMB 14063 / MR-1).